The primary structure comprises 87 residues: MARVTVEDCLDNVDNRFELVMLATKRSRQLATGGKEPKVAWENDKPTVVALREIAAGLVDYEVVAQEDIVEEEPLFAAFEEEANEPL.

Belongs to the RNA polymerase subunit omega family. As to quaternary structure, the RNAP catalytic core consists of 2 alpha, 1 beta, 1 beta' and 1 omega subunit. When a sigma factor is associated with the core the holoenzyme is formed, which can initiate transcription.

The enzyme catalyses RNA(n) + a ribonucleoside 5'-triphosphate = RNA(n+1) + diphosphate. In terms of biological role, promotes RNA polymerase assembly. Latches the N- and C-terminal regions of the beta' subunit thereby facilitating its interaction with the beta and alpha subunits. This chain is DNA-directed RNA polymerase subunit omega, found in Ectopseudomonas mendocina (strain ymp) (Pseudomonas mendocina).